A 368-amino-acid polypeptide reads, in one-letter code: MPKKTDTPDYKPSIYSLTRDELIAWAIEHGEKKFRASQIWDWLYKKRVQSFDEMTNISKDFIALLNENFVVNPLKQRIVQESADGTVKYLFELPDGMLIETVLMRQHYGLSVCVTTQVGCNIGCTFCASGLIKKQRDLNNGEITAQIMLVQKYFDERGQGERVSHIVVMGIGEPFDNYTNVLKFLRTVNDDNGLAIGARHITVSTSGLAHKIREFANEGVQVNLAVSLHAPNNELRSSIMRINRSFPLEKLFAAIEYYIETTNRRVTFEYIMLNGVNDTPENAQELADLTKKIRKLSYVNLIPYNPVSEHDQYSRSPKERVEAFYDVLKKNGVNCVVRQEHGTDIDAACGQLRSNTMKRDRQKAKVGQ.

The active-site Proton acceptor is the glutamate 100. One can recognise a Radical SAM core domain in the interval 106–344; that stretch reads QHYGLSVCVT…CVVRQEHGTD (239 aa). Cysteines 113 and 349 form a disulfide. Cysteine 120, cysteine 124, and cysteine 127 together coordinate [4Fe-4S] cluster. S-adenosyl-L-methionine-binding positions include 172–173, serine 204, 227–229, and asparagine 305; these read GE and SLH. Cysteine 349 serves as the catalytic S-methylcysteine intermediate.

Belongs to the radical SAM superfamily. RlmN family. It depends on [4Fe-4S] cluster as a cofactor.

It is found in the cytoplasm. The enzyme catalyses adenosine(2503) in 23S rRNA + 2 reduced [2Fe-2S]-[ferredoxin] + 2 S-adenosyl-L-methionine = 2-methyladenosine(2503) in 23S rRNA + 5'-deoxyadenosine + L-methionine + 2 oxidized [2Fe-2S]-[ferredoxin] + S-adenosyl-L-homocysteine. The catalysed reaction is adenosine(37) in tRNA + 2 reduced [2Fe-2S]-[ferredoxin] + 2 S-adenosyl-L-methionine = 2-methyladenosine(37) in tRNA + 5'-deoxyadenosine + L-methionine + 2 oxidized [2Fe-2S]-[ferredoxin] + S-adenosyl-L-homocysteine. In terms of biological role, specifically methylates position 2 of adenine 2503 in 23S rRNA and position 2 of adenine 37 in tRNAs. The polypeptide is Probable dual-specificity RNA methyltransferase RlmN (Streptococcus agalactiae serotype Ia (strain ATCC 27591 / A909 / CDC SS700)).